A 1503-amino-acid polypeptide reads, in one-letter code: Transient receptor potential cation channel subfamily M member 2 (1503 aa).

The interval 1–20 (MEPSALRKAGSEQEEGFEGL) is disordered. At 1 to 752 (MEPSALRKAG…WWGQLSVDNG (752 aa)) the chain is on the cytoplasmic side. ADP-D-ribose contacts are provided by Thr-174, Asn-179, Arg-302, Gly-333, and Thr-336. Phosphothreonine is present on Thr-740. Residues 753–769 (LWRVTLCMLAFPLLLTG) lie within the membrane without spanning it. Residues 770 to 795 (LISFREKRLQDVGTPAARARAFFTAP) lie on the Cytoplasmic side of the membrane. Residues 796 to 816 (VVVFHLNILSYFAFLCLFAYV) form a helical membrane-spanning segment. The Extracellular segment spans residues 817–827 (LMVDFQPVPSW). A helical membrane pass occupies residues 828 to 848 (CECAIYLWLFSLVCEEMRQLF). 2 residues coordinate Ca(2+): Glu-843 and Gln-846. At 849–867 (YDPDECGLMKKAALYFSDF) the chain is on the cytoplasmic side. The chain crosses the membrane as a helical span at residues 868–888 (WNKLDVGAILLFVAGLTCRLI). Asn-869 contributes to the Ca(2+) binding site. Topologically, residues 889–896 (PATLYPGR) are extracellular. The chain crosses the membrane as a helical span at residues 897-917 (VILSLDFILFCLRLMHIFTIS). Topologically, residues 918–929 (KTLGPKIIIVKR) are cytoplasmic. The chain crosses the membrane as a helical span at residues 930–950 (MMKDVFFFLFLLAVWVVSFGV). The Extracellular portion of the chain corresponds to 951–970 (AKQAILIHNERRVDWLFRGA). The pore-forming intramembrane region spans 971–985 (VYHSYLTIFGQIPGY). A Selectivity filter motif is present at residues 979-982 (FGQI). Residues 986–1022 (IDGVNFNPEHCSPNGTDPYKPKCPESDATQQRPAFPE) lie on the Extracellular side of the membrane. Cys-996 and Cys-1008 form a disulfide bridge. The helical transmembrane segment at 1023–1044 (WLTVLLLCLYLLFTNILLLNLL) threads the bilayer. The Cytoplasmic portion of the chain corresponds to 1045 to 1079 (IAMFNYTFQQVQEHTDQIWKFQRHDLIEEYHGRPA). A Ca(2+)-binding site is contributed by Glu-1073. The stretch at 1080–1098 (APPPFILLSHLQLFIKRVV) is an intramembrane region. Residues 1099–1503 (LKTPAKRHKQ…KAAAEFGAHY (405 aa)) lie on the Cytoplasmic side of the membrane. Residues 1206–1237 (EADVPTLASQKAAEEPDAEPGGRKKTEEPGDS) are disordered. A Nudix hydrolase domain is found at 1354–1498 (RWRRNEDGAI…KTLLQKAAAE (145 aa)). Positions 1381 and 1382 each coordinate ADP-D-ribose. The Nudix box signature appears at 1390-1411 (GSREPGEMLPRKLKRILRQEHW). Residues Asp-1431, Arg-1433, Tyr-1485, and Asn-1487 each contribute to the ADP-D-ribose site.

This sequence belongs to the transient receptor (TC 1.A.4) family. LTrpC subfamily. TRPM2 sub-subfamily. Homotetramer. Isoform 1 can interact with isoform 3. This interaction decreases Ca(2+) influx through isoform 1 and suppresses susceptibility to oxidative stress-induced cell death. Phosphorylation of TRPM2 at Thr-740 by protein kinase C (PKC) counteracts the effect of cytosolic Ca(2+) and elevates the temperature threshold. Highly expressed in brain and peripheral blood cells, such as neutrophils. Also detected in bone marrow, spleen, heart, liver and lung. Isoform 2 is found in neutrophil granulocytes.

The protein localises to the cell membrane. It is found in the perikaryon. Its subcellular location is the cell projection. It localises to the cytoplasmic vesicle. The protein resides in the lysosome. It carries out the reaction Ca(2+)(in) = Ca(2+)(out). The enzyme catalyses Na(+)(in) = Na(+)(out). Its activity is regulated as follows. Activated by intracellular ADP-ribose, beta-NAD (NAD(+)) and similar compounds, and by oxidative stress caused by reactive oxygen or nitrogen species. Ca(2+) and PI(4,5)P2 are required for channel opening by ADP-ribose. Activation by ADP-ribose and beta-NAD is strongly increased by moderate heat (35 to 40 degrees Celsius). Likewise, reactive oxygen species lower the threshold for activation by moderate heat (37 degrees Celsius). Activated by moderate heat (35 to 40 degrees Celsius). Inactivated by exposure to extracellular pH between 4.0 and 6.5; irreversibly inactivated when open channels are exposed to extracellular pH between 4.0 and 6.5, while pre-exposure of closed channels to extracellular pH 5.5 gives rise to currents that rapidly inactivate, but protects against irreversible inactivation. Inactivated by intracellular ATP. Activated by arachidonic acid. Inhibited by 2-aminoethyl diphenylborinate (2-APB). In terms of biological role, nonselective, voltage-independent cation channel that mediates Na(+) and Ca(2+) influx, leading to increased cytoplasmic Ca(2+) levels. Functions as a ligand-gated ion channel, gated by intracellular adenosine diphosphate ribose (ADP-ribose), Ca(2+), warm temperature, and oxidative stress. The precise physiological activators are under debate; the true, physiological activators may be ADP-ribose and ADP-ribose-2'-phosphate. Binding of ADP-ribose to the cytoplasmic Nudix domain causes a conformation change; the channel is primed but still requires Ca(2+) binding to trigger channel opening. Extracellular Ca(2+) passes through the channel and increases channel activity. Contributes to Ca(2+) release from intracellular stores in response to ADP-ribose. Plays a role in numerous processes that involve signaling via intracellular Ca(2+) levels. Besides, mediates the release of lysosomal Zn(2+) stores in response to reactive oxygen species, leading to increased cytosolic Zn(2+) levels. Plays a role in mediating behavorial and physiological responses to moderate heat and thereby contributes to body temperature homeostasis. Plays a role in insulin secretion, a process that requires increased cytoplasmic Ca(2+) levels. Required for normal IFNG and cytokine secretion and normal innate immune immunity in response to bacterial infection. Required for normal phagocytosis and cytokine release by macrophages exposed to zymosan (in vitro). Plays a role in dendritic cell differentiation and maturation, and in dendritic cell chemotaxis via its role in regulating cytoplasmic Ca(2+) levels. Plays a role in the regulation of the reorganization of the actin cytoskeleton and filopodia formation in response to reactive oxygen species via its role in increasing cytoplasmic Ca(2+) and Zn(2+) levels. Confers susceptibility to cell death following oxidative stress. Lacks cation channel activity. Does not mediate cation transport in response to oxidative stress or ADP-ribose. Its function is as follows. Lacks cation channel activity and negatively regulates the channel activity of isoform 1. Negatively regulates susceptibility to cell death in reposponse to oxidative stress. The chain is Transient receptor potential cation channel subfamily M member 2 (TRPM2) from Homo sapiens (Human).